Here is a 350-residue protein sequence, read N- to C-terminus: Uroporphyrinogen decarboxylase (350 aa).

Substrate contacts are provided by residues 28–32 (RQAGR), phenylalanine 47, aspartate 78, tyrosine 155, serine 210, and histidine 325.

This sequence belongs to the uroporphyrinogen decarboxylase family. Homodimer.

Its subcellular location is the cytoplasm. It carries out the reaction uroporphyrinogen III + 4 H(+) = coproporphyrinogen III + 4 CO2. It functions in the pathway porphyrin-containing compound metabolism; protoporphyrin-IX biosynthesis; coproporphyrinogen-III from 5-aminolevulinate: step 4/4. Functionally, catalyzes the decarboxylation of four acetate groups of uroporphyrinogen-III to yield coproporphyrinogen-III. The sequence is that of Uroporphyrinogen decarboxylase from Nostoc sp. (strain PCC 7120 / SAG 25.82 / UTEX 2576).